A 694-amino-acid chain; its full sequence is Elongation factor G (694 aa).

Positions 9–288 (SKIRNIGIMA…VIVKWLPSPK (280 aa)) constitute a tr-type G domain. Residues 18-25 (AHIDAGKT), 82-86 (DTPGH), and 136-139 (NKMD) contribute to the GTP site.

Belongs to the TRAFAC class translation factor GTPase superfamily. Classic translation factor GTPase family. EF-G/EF-2 subfamily.

Its subcellular location is the cytoplasm. In terms of biological role, catalyzes the GTP-dependent ribosomal translocation step during translation elongation. During this step, the ribosome changes from the pre-translocational (PRE) to the post-translocational (POST) state as the newly formed A-site-bound peptidyl-tRNA and P-site-bound deacylated tRNA move to the P and E sites, respectively. Catalyzes the coordinated movement of the two tRNA molecules, the mRNA and conformational changes in the ribosome. The protein is Elongation factor G of Chlamydia abortus (strain DSM 27085 / S26/3) (Chlamydophila abortus).